A 794-amino-acid polypeptide reads, in one-letter code: Phosphoribosylformylglycinamidine synthase subunit PurL (794 aa).

Residue His-47 is part of the active site. The ATP site is built by Tyr-50 and Lys-89. Glu-91 contacts Mg(2+). Residues 92–95 (SHNH) and Arg-114 each bind substrate. The Proton acceptor role is filled by His-93. Mg(2+) is bound at residue Asp-115. Gln-238 serves as a coordination point for substrate. Asp-266 is a binding site for Mg(2+). Position 310–312 (310–312 (ESQ)) interacts with substrate. ATP is bound by residues Asp-522 and Gly-559. Asn-560 provides a ligand contact to Mg(2+). Ser-562 is a binding site for substrate.

It belongs to the FGAMS family. Monomer. Part of the FGAM synthase complex composed of 1 PurL, 1 PurQ and 2 PurS subunits.

The protein resides in the cytoplasm. It carries out the reaction N(2)-formyl-N(1)-(5-phospho-beta-D-ribosyl)glycinamide + L-glutamine + ATP + H2O = 2-formamido-N(1)-(5-O-phospho-beta-D-ribosyl)acetamidine + L-glutamate + ADP + phosphate + H(+). The protein operates within purine metabolism; IMP biosynthesis via de novo pathway; 5-amino-1-(5-phospho-D-ribosyl)imidazole from N(2)-formyl-N(1)-(5-phospho-D-ribosyl)glycinamide: step 1/2. Functionally, part of the phosphoribosylformylglycinamidine synthase complex involved in the purines biosynthetic pathway. Catalyzes the ATP-dependent conversion of formylglycinamide ribonucleotide (FGAR) and glutamine to yield formylglycinamidine ribonucleotide (FGAM) and glutamate. The FGAM synthase complex is composed of three subunits. PurQ produces an ammonia molecule by converting glutamine to glutamate. PurL transfers the ammonia molecule to FGAR to form FGAM in an ATP-dependent manner. PurS interacts with PurQ and PurL and is thought to assist in the transfer of the ammonia molecule from PurQ to PurL. The chain is Phosphoribosylformylglycinamidine synthase subunit PurL from Prochlorococcus marinus (strain MIT 9313).